The chain runs to 480 residues: Glycogen synthase (480 aa).

Lys15 serves as a coordination point for ADP-alpha-D-glucose.

It belongs to the glycosyltransferase 1 family. Bacterial/plant glycogen synthase subfamily.

The enzyme catalyses [(1-&gt;4)-alpha-D-glucosyl](n) + ADP-alpha-D-glucose = [(1-&gt;4)-alpha-D-glucosyl](n+1) + ADP + H(+). It participates in glycan biosynthesis; glycogen biosynthesis. Synthesizes alpha-1,4-glucan chains using ADP-glucose. The chain is Glycogen synthase from Rhizobium leguminosarum bv. trifolii (strain WSM2304).